The sequence spans 426 residues: 3-phosphoshikimate 1-carboxyvinyltransferase (426 aa).

3-phosphoshikimate is bound by residues lysine 22, serine 23, and arginine 27. Phosphoenolpyruvate is bound at residue lysine 22. 2 residues coordinate phosphoenolpyruvate: glycine 96 and arginine 124. Serine 170, serine 171, glutamine 172, serine 198, aspartate 314, asparagine 337, and lysine 341 together coordinate 3-phosphoshikimate. Phosphoenolpyruvate is bound at residue glutamine 172. Aspartate 314 (proton acceptor) is an active-site residue. Phosphoenolpyruvate-binding residues include arginine 345, arginine 387, and lysine 412.

It belongs to the EPSP synthase family. Monomer.

It is found in the cytoplasm. The catalysed reaction is 3-phosphoshikimate + phosphoenolpyruvate = 5-O-(1-carboxyvinyl)-3-phosphoshikimate + phosphate. The protein operates within metabolic intermediate biosynthesis; chorismate biosynthesis; chorismate from D-erythrose 4-phosphate and phosphoenolpyruvate: step 6/7. In terms of biological role, catalyzes the transfer of the enolpyruvyl moiety of phosphoenolpyruvate (PEP) to the 5-hydroxyl of shikimate-3-phosphate (S3P) to produce enolpyruvyl shikimate-3-phosphate and inorganic phosphate. The sequence is that of 3-phosphoshikimate 1-carboxyvinyltransferase from Shewanella pealeana (strain ATCC 700345 / ANG-SQ1).